The sequence spans 487 residues: MKALDELTFDNRFARLGDAFSAHVLPEPIDNPRLVVASPAALALLDLDPAMADTQEFAELFGGHKLWADAEPRAMVYSGHQFGGYTPQLGDGRGLLLGEVYNAAGEHWDLHLKGAGQTPFSRMGDGRAVLRSSIREFLASEALHALNIPSSRAACVIGSDTPVWREKQERAAMVLRLAPSHIRFGHFEYFYYTKRPEQQKLLGEHVLAMHYPECLEQPEPYLAMFREIVERNAELIAKWQAYGFCHGVMNTDNMSILGITFDFGPFAFLDDFDANFICNHSDDQGRYSFSNQVPVGQWNLSTLAQALTPLISVEALRETLGLYLPLFQAHYLDLMRRRLGFTTAEDDDQMLLEQLLQLMQNSGVDYTLFFRRLGEESAEQAVARLRDDFVDIKGFDAWGERYVARVARDGATDQEQRRARMHAVNPLYILRNYLAQKAIDAAEQGDYSEVRRLHAVLSNPFEEQPGMESYAERPPEWGKHLEISCSS.

ATP is bound by residues Gly90, Gly92, Arg93, Lys113, Asp125, Gly126, Arg176, and Arg183. The Proton acceptor role is filled by Asp252. Residues Asn253 and Asp262 each contribute to the Mg(2+) site. Asp262 contacts ATP.

It belongs to the SELO family. It depends on Mg(2+) as a cofactor. Requires Mn(2+) as cofactor.

The enzyme catalyses L-seryl-[protein] + ATP = 3-O-(5'-adenylyl)-L-seryl-[protein] + diphosphate. It catalyses the reaction L-threonyl-[protein] + ATP = 3-O-(5'-adenylyl)-L-threonyl-[protein] + diphosphate. The catalysed reaction is L-tyrosyl-[protein] + ATP = O-(5'-adenylyl)-L-tyrosyl-[protein] + diphosphate. It carries out the reaction L-histidyl-[protein] + UTP = N(tele)-(5'-uridylyl)-L-histidyl-[protein] + diphosphate. The enzyme catalyses L-seryl-[protein] + UTP = O-(5'-uridylyl)-L-seryl-[protein] + diphosphate. It catalyses the reaction L-tyrosyl-[protein] + UTP = O-(5'-uridylyl)-L-tyrosyl-[protein] + diphosphate. Functionally, nucleotidyltransferase involved in the post-translational modification of proteins. It can catalyze the addition of adenosine monophosphate (AMP) or uridine monophosphate (UMP) to a protein, resulting in modifications known as AMPylation and UMPylation. In Pseudomonas fluorescens (strain Pf0-1), this protein is Protein nucleotidyltransferase YdiU.